A 295-amino-acid chain; its full sequence is 33 kDa chaperonin (295 aa).

2 disulfides stabilise this stretch: Cys230/Cys232 and Cys264/Cys267.

It belongs to the HSP33 family. In terms of processing, under oxidizing conditions two disulfide bonds are formed involving the reactive cysteines. Under reducing conditions zinc is bound to the reactive cysteines and the protein is inactive.

Its subcellular location is the cytoplasm. Redox regulated molecular chaperone. Protects both thermally unfolding and oxidatively damaged proteins from irreversible aggregation. Plays an important role in the bacterial defense system toward oxidative stress. The polypeptide is 33 kDa chaperonin (Ectopseudomonas mendocina (strain ymp) (Pseudomonas mendocina)).